The primary structure comprises 1746 residues: Inactive tyrosine-protein kinase PEAK1 (1746 aa).

Positions 44–66 (KTNANHSNNHRIRNTGNFRPPVA) are disordered. Ser281 is subject to Phosphoserine. Disordered regions lie at residues 334-411 (QSMV…KVPE) and 489-517 (LEGP…LTPG). Positions 338 to 349 (SSDSTSPDSSLT) are enriched in low complexity. Over residues 355 to 364 (ETASSLSQKI) the composition is skewed to polar residues. A compositionally biased stretch (low complexity) spans 492 to 513 (PVNSPKTKSSSSTPNSPVTSSS). Phosphoserine is present on residues Ser540, Ser572, and Ser587. Residues 551 to 577 (ITSGTGPNVPPRKNCHKSAPTSPTATN) form a disordered region. Phosphotyrosine occurs at positions 635 and 641. Ser648 is subject to Phosphoserine. Tyr665 is modified (phosphotyrosine). Disordered stretches follow at residues 671–700 (ESKV…HKRG), 713–764 (LNRG…EKAS), 802–920 (DADV…AADA), 1052–1102 (VTED…DPNP), and 1138–1158 (GKTD…LPKK). Residues 675 to 694 (PDNTTSKTTDCLQTKGFSNS) show a composition bias toward polar residues. A compositionally biased stretch (low complexity) spans 718 to 730 (SSPQRSYSSSHSS). Composition is skewed to polar residues over residues 748–758 (TQESQMVGSSS) and 820–841 (LFTS…PTTK). A phosphoserine mark is found at Ser826 and Ser854. Pro residues predominate over residues 864–874 (SEPPAPFPPPR). Over residues 889-902 (HFTNWTKPTSPTRS) the composition is skewed to polar residues. Position 898 is a phosphoserine (Ser898). 3 stretches are compositionally biased toward basic and acidic residues: residues 903-920 (TEAE…AADA), 1052-1062 (VTEDFSPRDPR), and 1084-1094 (ELEREDGKEDI). Thr1151 is subject to Phosphothreonine. At Tyr1188 the chain carries Phosphotyrosine. Residues 1285-1311 (EVVGKIRSLHTDALKKLAVKCEDLFMA) are required for homodimerization. One can recognise a Protein kinase domain in the interval 1313–1675 (QKDQLRFGVD…LLWGPREDLF (363 aa)). Ser1374 carries the phosphoserine modification. The interval 1402–1456 (LLPWEDPDDPEKDEDDMEETEEDAKGETDGKNPKPCSEAASSQKENQGVMSKKQR) is disordered. The segment covering 1406-1423 (EDPDDPEKDEDDMEETEE) has biased composition (acidic residues). Residues 1424-1433 (DAKGETDGKN) show a composition bias toward basic and acidic residues. Positions 1440 to 1450 (AASSQKENQGV) are enriched in polar residues. Residues 1670-1743 (PREDLFQTFT…DSLSCIVKIL (74 aa)) form a required for homodimerization region.

The protein belongs to the protein kinase superfamily. In terms of assembly, homodimer. Interacts with BCAR1 and CRK. Interacts with PRAG1. Interacts (when phosphorylated at Tyr-1188) with SHC1 (via PID domain). Found in a complex with PPP1CA, PPP1CC, SHC1 and PEAK1. Interacts (when phosphorylated at Tyr-635) with tensin TNS3 (when phosphorylated on the SH2 domain); TNS3 also interacts with integrins ITGB1, ITGB3 and ITGB5 and mediates their association with PEAK1. Interacts with RASAL2 and GRB2. Phosphorylated on tyrosine in a CSK-dependent manner in response to adhesion to fibronectin and to EGF stimulation. Phosphorylation at Tyr-665 by a Src family kinase controls subcellular localization to focal adhesion and focal adhesion dynamics. Phosphorylation at Tyr-1188 is essential for binding to SHC1. Phosphorylation at Tyr-635 promotes interaction with tensin TNS3.

It localises to the cytoplasm. The protein resides in the cytoskeleton. The protein localises to the cell junction. Its subcellular location is the focal adhesion. Functionally, probable catalytically inactive kinase. Scaffolding protein that regulates the cytoskeleton to control cell spreading and migration by modulating focal adhesion dynamics. Acts as a scaffold for mediating EGFR signaling. In Homo sapiens (Human), this protein is Inactive tyrosine-protein kinase PEAK1 (PEAK1).